The following is a 494-amino-acid chain: Cytochrome P450 2A3 (494 aa).

Ser-131 carries the post-translational modification Phosphoserine. Lys-379 is subject to N6-acetyllysine. Position 439 (Cys-439) interacts with heme.

The protein belongs to the cytochrome P450 family. The cofactor is heme. In terms of tissue distribution, lung.

It localises to the endoplasmic reticulum membrane. It is found in the microsome membrane. It catalyses the reaction an organic molecule + reduced [NADPH--hemoprotein reductase] + O2 = an alcohol + oxidized [NADPH--hemoprotein reductase] + H2O + H(+). In terms of biological role, cytochromes P450 are a group of heme-thiolate monooxygenases. In liver microsomes, this enzyme is involved in an NADPH-dependent electron transport pathway. It oxidizes a variety of structurally unrelated compounds, including steroids, fatty acids, and xenobiotics. The protein is Cytochrome P450 2A3 (Cyp2a3) of Rattus norvegicus (Rat).